Reading from the N-terminus, the 219-residue chain is Ropporin-1-like protein (219 aa).

Positions 17-54 constitute an RIIa domain; that stretch reads PELPDILKQFTKAAIRTQPHDLLQWSAAYFDSLSKGEP.

The protein belongs to the ropporin family. In terms of assembly, component of axonemal radial spoke complexes.

It is found in the cell projection. The protein localises to the cilium. The protein resides in the flagellum. Its function is as follows. Functions as part of axonemal radial spoke complexes that play an important part in the motility of sperm and cilia. Important for male fertility. Involved in fibrous sheath integrity and sperm motility, plays a role in PKA-dependent signaling processes required for spermatozoa capacitation. The sequence is that of Ropporin-1-like protein (ropn1l) from Xenopus laevis (African clawed frog).